Consider the following 332-residue polypeptide: rRNA biogenesis protein rrp-36 (332 aa).

Disordered regions lie at residues M1–L91, G104–S196, S243–S262, and K312–R332. Acidic residues-rich tracts occupy residues E27 to G45, D53 to A77, and E117 to E127. 2 stretches are compositionally biased toward basic and acidic residues: residues E128–K142 and R165–R183. A coiled-coil region spans residues D212–Q274. Positions A315–R332 are enriched in basic and acidic residues.

The protein belongs to the RRP36 family. As to quaternary structure, associates with 90S and pre-40S pre-ribosomal particles.

The protein resides in the nucleus. It is found in the nucleolus. Component of the 90S pre-ribosome involved in the maturation of rRNAs. Required for early cleavages of the pre-RNAs in the 40S ribosomal subunit maturation pathway. The chain is rRNA biogenesis protein rrp-36 (rrp-36) from Neurospora crassa (strain ATCC 24698 / 74-OR23-1A / CBS 708.71 / DSM 1257 / FGSC 987).